Here is a 62-residue protein sequence, read N- to C-terminus: Phospholipase A2 superbin a (62 aa).

Tyr-28, Gly-30, and Gly-32 together coordinate Ca(2+). Cys-29 and Cys-45 are joined by a disulfide. The active site involves His-48. Ca(2+) is bound at residue Asp-49.

Ca(2+) is required as a cofactor. Expressed by the venom gland.

It localises to the secreted. It catalyses the reaction a 1,2-diacyl-sn-glycero-3-phosphocholine + H2O = a 1-acyl-sn-glycero-3-phosphocholine + a fatty acid + H(+). Snake venom phospholipase A2 (PLA2) that inhibits collagen-induced platelet aggregation. In terms of inhibition of platelet aggregation, superbin a is more potent as superbin b, c, and d. PLA2 catalyzes the calcium-dependent hydrolysis of the 2-acyl groups in 3-sn-phosphoglycerides. This is Phospholipase A2 superbin a from Austrelaps superbus (Lowland copperhead snake).